The primary structure comprises 394 residues: MVPARSLAHPHPHLVRRRRDHAAAAHGATARCDDDDDGVVTPRGPTRYMAQEPINHHQHQHDPPKQPPPREADDDHHRIQEREPLPPPTTTTRNQRLQLQLGGDGHHNHHHHHHQEVAGTSGSSSGGSSSNNGGGGTRDWLRLATGPASPGASAGSDHDLFPSTTTTAPAPQPPTPTPTPTPTPTPRHHHHDVLVLPGMPPPGSFLRPGPAMPGIPQASIPTHMLRAAPPWLPPWSPVAAPPPLLPFPHQHRAFYAAPPTTTPPASSGFDAIRVVLPPSAVAAAAGVWFVLQAAPLQGREPFLPQIPRSYLRIKDGRVTVRLLTKYLVNKLGLEDESEVEITCRGRQLLPILTLQHVRDSIWCRRDAVSPSAAPDIPTADHHQHIMVLQYGRRP.

Residues 1-193 (MVPARSLAHP…PTPRHHHHDV (193 aa)) are disordered. The segment covering 8 to 20 (AHPHPHLVRRRRD) has biased composition (basic residues). The segment covering 60 to 84 (QHDPPKQPPPREADDDHHRIQEREP) has biased composition (basic and acidic residues). 3 stretches are compositionally biased toward low complexity: residues 90 to 101 (TTTRNQRLQLQL), 119 to 131 (GTSGSSSGGSSSN), and 146 to 155 (GPASPGASAG). Pro residues predominate over residues 170–185 (APQPPTPTPTPTPTPT).

Interacts with LAX1.

The protein resides in the nucleus. Functionally, involved in the regulation of shoot branching by controlling axillary meristem (AM) formation. Functions in association with LAX1 to regulate the process of AM formation. Possesses transactivation activity in yeast. The protein is Protein LAX PANICLE 2 of Oryza sativa subsp. japonica (Rice).